Reading from the N-terminus, the 93-residue chain is Co-chaperonin GroES (93 aa).

The protein belongs to the GroES chaperonin family. Heptamer of 7 subunits arranged in a ring. Interacts with the chaperonin GroEL.

The protein localises to the cytoplasm. In terms of biological role, together with the chaperonin GroEL, plays an essential role in assisting protein folding. The GroEL-GroES system forms a nano-cage that allows encapsulation of the non-native substrate proteins and provides a physical environment optimized to promote and accelerate protein folding. GroES binds to the apical surface of the GroEL ring, thereby capping the opening of the GroEL channel. This chain is Co-chaperonin GroES, found in Streptococcus sanguinis.